The following is a 103-amino-acid chain: Small ribosomal subunit protein uS10 (103 aa).

Belongs to the universal ribosomal protein uS10 family. Part of the 30S ribosomal subunit.

Functionally, involved in the binding of tRNA to the ribosomes. This is Small ribosomal subunit protein uS10 from Chlorobium luteolum (strain DSM 273 / BCRC 81028 / 2530) (Pelodictyon luteolum).